The following is a 145-amino-acid chain: MNPAHLLILSAVCVSLLGAANVPPQHLNLYQFKNMIVCAGTRPWIGYVNYGCYCGAGGSGTPVDELDRCCYVHDNCYGEAEKIPGCNPKTKTYSYTCTKPNLTCTDAAGTCARIVCDCDRTAAICFAAAPYNINNFMISSSTHCQ.

A signal peptide spans 1 to 19 (MNPAHLLILSAVCVSLLGA). A propeptide spanning residues 20–27 (ANVPPQHL) is cleaved from the precursor. 7 disulfides stabilise this stretch: Cys-38/Cys-97, Cys-52/Cys-144, Cys-54/Cys-70, Cys-69/Cys-125, Cys-76/Cys-118, Cys-86/Cys-111, and Cys-104/Cys-116. Residues Tyr-53, Gly-55, and Gly-57 each contribute to the Ca(2+) site. The active site involves His-73. Asp-74 provides a ligand contact to Ca(2+). Asp-119 is a catalytic residue.

The protein belongs to the phospholipase A2 family. Group I subfamily. D49 sub-subfamily. Ca(2+) is required as a cofactor. Expressed by the venom gland.

It localises to the secreted. It carries out the reaction a 1,2-diacyl-sn-glycero-3-phosphocholine + H2O = a 1-acyl-sn-glycero-3-phosphocholine + a fatty acid + H(+). In terms of biological role, PLA2 catalyzes the calcium-dependent hydrolysis of the 2-acyl groups in 3-sn-phosphoglycerides. This is Acidic phospholipase A2 from Bungarus multicinctus (Many-banded krait).